The following is a 72-amino-acid chain: Exodeoxyribonuclease 7 small subunit (72 aa).

The protein belongs to the XseB family. In terms of assembly, heterooligomer composed of large and small subunits.

It localises to the cytoplasm. It catalyses the reaction Exonucleolytic cleavage in either 5'- to 3'- or 3'- to 5'-direction to yield nucleoside 5'-phosphates.. In terms of biological role, bidirectionally degrades single-stranded DNA into large acid-insoluble oligonucleotides, which are then degraded further into small acid-soluble oligonucleotides. The polypeptide is Exodeoxyribonuclease 7 small subunit (Clostridium kluyveri (strain NBRC 12016)).